A 177-amino-acid chain; its full sequence is Probable prophage lysozyme (177 aa).

Residue Glu-35 is the Proton donor of the active site. Residue Asp-44 is the Nucleophile of the active site.

Belongs to the glycosyl hydrolase 24 family.

It catalyses the reaction Hydrolysis of (1-&gt;4)-beta-linkages between N-acetylmuramic acid and N-acetyl-D-glucosamine residues in a peptidoglycan and between N-acetyl-D-glucosamine residues in chitodextrins.. Essential for lysis of bacterial cell wall, by showing cell wall hydrolyzing activity. The protein is Probable prophage lysozyme (rrrQ) of Escherichia coli (strain K12).